Here is a 595-residue protein sequence, read N- to C-terminus: Aspartate--tRNA(Asp/Asn) ligase (595 aa).

E178 provides a ligand contact to L-aspartate. The aspartate stretch occupies residues 202 to 205 (QLFK). Residue R224 participates in L-aspartate binding. Residues 224–226 (RDE) and Q233 each bind ATP. H458 provides a ligand contact to L-aspartate. E488 provides a ligand contact to ATP. R495 is an L-aspartate binding site. ATP is bound at residue 540–543 (GLDR).

It belongs to the class-II aminoacyl-tRNA synthetase family. Type 1 subfamily. In terms of assembly, homodimer.

It localises to the cytoplasm. The enzyme catalyses tRNA(Asx) + L-aspartate + ATP = L-aspartyl-tRNA(Asx) + AMP + diphosphate. Aspartyl-tRNA synthetase with relaxed tRNA specificity since it is able to aspartylate not only its cognate tRNA(Asp) but also tRNA(Asn). Reaction proceeds in two steps: L-aspartate is first activated by ATP to form Asp-AMP and then transferred to the acceptor end of tRNA(Asp/Asn). This chain is Aspartate--tRNA(Asp/Asn) ligase, found in Trichodesmium erythraeum (strain IMS101).